A 547-amino-acid polypeptide reads, in one-letter code: CTP synthase (547 aa).

The tract at residues methionine 1–isoleucine 265 is amidoligase domain. Serine 13 is a binding site for CTP. A UTP-binding site is contributed by serine 13. ATP-binding positions include serine 14–isoleucine 19 and aspartate 71. Mg(2+) contacts are provided by aspartate 71 and glutamate 139. CTP-binding positions include aspartate 146–glutamate 148, lysine 186–glutamine 191, and lysine 222. Residues lysine 186–glutamine 191 and lysine 222 contribute to the UTP site. The region spanning threonine 290–lysine 541 is the Glutamine amidotransferase type-1 domain. Residue glycine 351 participates in L-glutamine binding. Catalysis depends on cysteine 378, which acts as the Nucleophile; for glutamine hydrolysis. Residues leucine 379–glutamine 382, glutamate 402, and arginine 469 each bind L-glutamine. Active-site residues include histidine 514 and glutamate 516.

It belongs to the CTP synthase family. As to quaternary structure, homotetramer.

The catalysed reaction is UTP + L-glutamine + ATP + H2O = CTP + L-glutamate + ADP + phosphate + 2 H(+). It carries out the reaction L-glutamine + H2O = L-glutamate + NH4(+). The enzyme catalyses UTP + NH4(+) + ATP = CTP + ADP + phosphate + 2 H(+). Its pathway is pyrimidine metabolism; CTP biosynthesis via de novo pathway; CTP from UDP: step 2/2. Its activity is regulated as follows. Allosterically activated by GTP, when glutamine is the substrate; GTP has no effect on the reaction when ammonia is the substrate. The allosteric effector GTP functions by stabilizing the protein conformation that binds the tetrahedral intermediate(s) formed during glutamine hydrolysis. Inhibited by the product CTP, via allosteric rather than competitive inhibition. Its function is as follows. Catalyzes the ATP-dependent amination of UTP to CTP with either L-glutamine or ammonia as the source of nitrogen. Regulates intracellular CTP levels through interactions with the four ribonucleotide triphosphates. The sequence is that of CTP synthase from Thioalkalivibrio sulfidiphilus (strain HL-EbGR7).